The following is a 380-amino-acid chain: Histidinol-phosphate aminotransferase (380 aa).

Lysine 235 carries the post-translational modification N6-(pyridoxal phosphate)lysine.

The protein belongs to the class-II pyridoxal-phosphate-dependent aminotransferase family. Histidinol-phosphate aminotransferase subfamily. In terms of assembly, homodimer. Requires pyridoxal 5'-phosphate as cofactor.

It carries out the reaction L-histidinol phosphate + 2-oxoglutarate = 3-(imidazol-4-yl)-2-oxopropyl phosphate + L-glutamate. It participates in amino-acid biosynthesis; L-histidine biosynthesis; L-histidine from 5-phospho-alpha-D-ribose 1-diphosphate: step 7/9. This Rhodococcus jostii (strain RHA1) protein is Histidinol-phosphate aminotransferase.